The primary structure comprises 179 residues: NADH-quinone oxidoreductase subunit I (179 aa).

2 consecutive 4Fe-4S ferredoxin-type domains span residues Arg-45–Ala-74 and Lys-90–Glu-119. [4Fe-4S] cluster-binding residues include Cys-54, Cys-57, Cys-60, Cys-64, Cys-99, Cys-102, Cys-105, and Cys-109. The interval Pro-146–Arg-179 is disordered. Positions Pro-168–Arg-179 are enriched in basic and acidic residues.

Belongs to the complex I 23 kDa subunit family. In terms of assembly, NDH-1 is composed of 15 different subunits. Subunits NuoA, H, J, K, L, M, N constitute the membrane sector of the complex. It depends on [4Fe-4S] cluster as a cofactor.

Its subcellular location is the cell membrane. The catalysed reaction is a quinone + NADH + 5 H(+)(in) = a quinol + NAD(+) + 4 H(+)(out). Its function is as follows. NDH-1 shuttles electrons from NADH, via FMN and iron-sulfur (Fe-S) centers, to quinones in the respiratory chain. The immediate electron acceptor for the enzyme in this species is believed to be ubiquinone. Couples the redox reaction to proton translocation (for every two electrons transferred, four hydrogen ions are translocated across the cytoplasmic membrane), and thus conserves the redox energy in a proton gradient. The sequence is that of NADH-quinone oxidoreductase subunit I from Deinococcus geothermalis (strain DSM 11300 / CIP 105573 / AG-3a).